A 989-amino-acid polypeptide reads, in one-letter code: Putative transcription elongation factor SPT5 homolog 2 (989 aa).

A compositionally biased stretch (acidic residues) spans 1–26 (MSQYSDDDYSHEDDSEMEDEDEEDEY). The disordered stretch occupies residues 1–82 (MSQYSDDDYS…VEDDDDDVDV (82 aa)). The span at 31-42 (SRKGRSGKKRGR) shows a compositional bias: basic residues. Residues 65-82 (WEVEVDDDVEDDDDDVDV) are compositionally biased toward acidic residues. KOW domains are found at residues 260–287 (DLSR…VDNV), 412–439 (HFMK…VDEE), 464–491 (YFEP…VDQH), 588–615 (VVAV…IYKG), and 683–710 (DHLV…VKDK). Residues 790–852 (MSPPRDNWED…SPMTPSSTSY (63 aa)) form a disordered region. Positions 842–852 (PSPMTPSSTSY) are enriched in low complexity. The 28-residue stretch at 936–963 (CPKKNERVKILGGKYCGSTAKVIGEDGQ) folds into the KOW 6 domain.

It belongs to the SPT5 family.

The protein localises to the nucleus. Functionally, may regulate transcription elongation by RNA polymerase II. May enhance transcriptional pausing at sites proximal to the promoter, which may in turn facilitate the assembly of an elongation competent RNA polymerase II complex. The chain is Putative transcription elongation factor SPT5 homolog 2 from Arabidopsis thaliana (Mouse-ear cress).